Reading from the N-terminus, the 365-residue chain is Putative agmatine deiminase (365 aa).

Catalysis depends on cysteine 357, which acts as the Amidino-cysteine intermediate.

Belongs to the agmatine deiminase family.

It carries out the reaction agmatine + H2O = N-carbamoylputrescine + NH4(+). This Yersinia pseudotuberculosis serotype O:1b (strain IP 31758) protein is Putative agmatine deiminase.